The chain runs to 341 residues: N-acetyl-gamma-glutamyl-phosphate reductase (341 aa).

Residue Cys146 is part of the active site.

Belongs to the NAGSA dehydrogenase family. Type 1 subfamily.

The protein resides in the cytoplasm. It catalyses the reaction N-acetyl-L-glutamate 5-semialdehyde + phosphate + NADP(+) = N-acetyl-L-glutamyl 5-phosphate + NADPH + H(+). It participates in amino-acid biosynthesis; L-arginine biosynthesis; N(2)-acetyl-L-ornithine from L-glutamate: step 3/4. In terms of biological role, catalyzes the NADPH-dependent reduction of N-acetyl-5-glutamyl phosphate to yield N-acetyl-L-glutamate 5-semialdehyde. The polypeptide is N-acetyl-gamma-glutamyl-phosphate reductase (Limosilactobacillus fermentum (strain NBRC 3956 / LMG 18251) (Lactobacillus fermentum)).